Consider the following 423-residue polypeptide: D-tagatose-1,6-bisphosphate aldolase subunit GatZ (423 aa).

Belongs to the GatZ/KbaZ family. GatZ subfamily. As to quaternary structure, forms a complex with GatY.

Its pathway is carbohydrate metabolism; D-tagatose 6-phosphate degradation; D-glyceraldehyde 3-phosphate and glycerone phosphate from D-tagatose 6-phosphate: step 2/2. Its function is as follows. Component of the tagatose-1,6-bisphosphate aldolase GatYZ that is required for full activity and stability of the Y subunit. Could have a chaperone-like function for the proper and stable folding of GatY. When expressed alone, GatZ does not show any aldolase activity. Is involved in the catabolism of galactitol. The chain is D-tagatose-1,6-bisphosphate aldolase subunit GatZ from Salmonella dublin (strain CT_02021853).